Reading from the N-terminus, the 356-residue chain is Tyrosine recombinase XerS (356 aa).

The Core-binding (CB) domain maps to 16–121 (IMPWYVLDYY…ALSSLYKYLT (106 aa)). The Tyr recombinase domain occupies 169 to 354 (AFLDYVDKEY…VNDEQKNALD (186 aa)). Catalysis depends on residues Arg210, Lys234, His306, Arg309, and His332. Residue Tyr341 is the O-(3'-phospho-DNA)-tyrosine intermediate of the active site.

It belongs to the 'phage' integrase family. XerS subfamily.

Its subcellular location is the cytoplasm. Its activity is regulated as follows. FtsK is required for recombination. Functionally, site-specific tyrosine recombinase, which acts by catalyzing the cutting and rejoining of the recombining DNA molecules. Essential to convert dimers of the bacterial chromosome into monomers to permit their segregation at cell division. This chain is Tyrosine recombinase XerS, found in Streptococcus equi subsp. zooepidemicus (strain H70).